The following is a 1082-amino-acid chain: Probable arabinosyltransferase B (1082 aa).

Helical transmembrane passes span 28-50, 223-241, 262-281, 333-352, 359-381, 420-442, 462-481, 522-544, 557-574, 578-600, 613-635, 650-672, and 689-711; these read WVAT…LPVT, LAAM…LALW, VTAV…VIGA, SIWI…LLLS, LGPA…LGAW, AITT…AALL, WPLI…VVFA, AISR…FMML, AWRL…LMFT, WTHH…TVLV, AFLS…WWYV, GGVQ…AFWL, and APIP…IGVV.

Belongs to the emb family.

Its subcellular location is the cell membrane. Its function is as follows. Arabinosyl transferase responsible for the polymerization of arabinose into the arabinan of arabinogalactan. In Mycolicibacterium smegmatis (Mycobacterium smegmatis), this protein is Probable arabinosyltransferase B (embB).